A 270-amino-acid chain; its full sequence is Putative hydro-lyase Noca_0093 (270 aa).

Belongs to the D-glutamate cyclase family.

This is Putative hydro-lyase Noca_0093 from Nocardioides sp. (strain ATCC BAA-499 / JS614).